The following is a 220-amino-acid chain: DNA replication complex GINS protein SLD5 (220 aa).

This sequence belongs to the GINS4/SLD5 family. Component of the GINS complex. Interacts with EOL1 in the nucleus.

It is found in the nucleus. Functionally, the GINS complex plays an essential role in the initiation of DNA replication. Required during embryogenesis. This Arabidopsis thaliana (Mouse-ear cress) protein is DNA replication complex GINS protein SLD5.